The following is a 483-amino-acid chain: Glycogen synthase (483 aa).

Lysine 15 contacts ADP-alpha-D-glucose.

It belongs to the glycosyltransferase 1 family. Bacterial/plant glycogen synthase subfamily.

It catalyses the reaction [(1-&gt;4)-alpha-D-glucosyl](n) + ADP-alpha-D-glucose = [(1-&gt;4)-alpha-D-glucosyl](n+1) + ADP + H(+). It participates in glycan biosynthesis; glycogen biosynthesis. In terms of biological role, synthesizes alpha-1,4-glucan chains using ADP-glucose. This chain is Glycogen synthase, found in Petrotoga mobilis (strain DSM 10674 / SJ95).